Here is a 987-residue protein sequence, read N- to C-terminus: Ephrin type-B receptor 2 (987 aa).

Residues 1-19 (MGPLWFCCLPLALLPLLAA) form the signal peptide. The Extracellular portion of the chain corresponds to 20-544 (VEETLMDSTT…QTSVQEKLPL (525 aa)). An Eph LBD domain is found at 21 to 203 (EETLMDSTTA…FYRKCPRVIQ (183 aa)). 2 disulfide bridges follow: cysteine 63-cysteine 185 and cysteine 98-cysteine 108. Residues asparagine 266, asparagine 337, asparagine 429, asparagine 478, and asparagine 483 are each glycosylated (N-linked (GlcNAc...) asparagine). Fibronectin type-III domains follow at residues 325 to 435 (IPSA…TNQA) and 436 to 531 (APSA…TMTE). The helical transmembrane segment at 545 to 565 (IIGSSAAGLVFLIAVVVIIIV) threads the bilayer. Over 566-987 (CNRRGFERAD…QMNQIQSVEV (422 aa)) the chain is Cytoplasmic. Residues 622–885 (VKIEQVIGAG…QIVNTLDKMI (264 aa)) form the Protein kinase domain. Residues 628–636 (IGAGEFGEV) and lysine 654 contribute to the ATP site. The Proton acceptor role is filled by aspartate 747. A Glycyl lysine isopeptide (Lys-Gly) (interchain with G-Cter in ubiquitin) cross-link involves residue lysine 892. The region spanning 914–978 (TSFNTVDEWL…LNSIQVMRAQ (65 aa)) is the SAM domain. A PDZ-binding motif is present at residues 985–987 (VEV).

It belongs to the protein kinase superfamily. Tyr protein kinase family. Ephrin receptor subfamily. Heterotetramer upon binding of the ligand. The heterotetramer is composed of an ephrin dimer and a receptor dimer. Oligomerization is probably required to induce biological responses. In terms of processing, ligand binding induces cleavage by matrix metalloproteinases (MMPs) such as MMP7/MMP9, producing an EphB2/N-terminal fragment (NTF) and a C-terminal long fragment (EphB2-LF). EphB2-LF is further cleaved by MMPs, producing EphB2/CTF1 which is further cleaved by the PS1/gamma-secretase producing EphB2/CTF2. Polyubiquitinated; ligand binding stimulates ubiquitination. Ubiquitinated by RNF186 at Lys-892, mainly through 'Lys-27'-linked polyubiquitin chains.

Its subcellular location is the cell membrane. It is found in the cell projection. It localises to the axon. The protein localises to the dendrite. The catalysed reaction is L-tyrosyl-[protein] + ATP = O-phospho-L-tyrosyl-[protein] + ADP + H(+). Functionally, receptor tyrosine kinase which binds promiscuously transmembrane ephrin-B family ligands residing on adjacent cells, leading to contact-dependent bidirectional signaling into neighboring cells. The signaling pathway downstream of the receptor is referred to as forward signaling while the signaling pathway downstream of the ephrin ligand is referred to as reverse signaling. Functions in axon guidance during development. In addition to axon guidance, also regulates dendritic spines development and maturation and stimulates the formation of excitatory synapses. This Coturnix japonica (Japanese quail) protein is Ephrin type-B receptor 2 (EPHB2).